The sequence spans 109 residues: Ubiquitin-related modifier 1 homolog (109 aa).

Gly-109 is modified (1-thioglycine). Residue Gly-109 forms a Glycyl lysine isopeptide (Gly-Lys) (interchain with K-? in acceptor proteins) linkage.

The protein belongs to the URM1 family. In terms of processing, C-terminal thiocarboxylation occurs in 2 steps, it is first acyl-adenylated (-COAMP) via the hesA/moeB/thiF part of the MOCS3 homolog, then thiocarboxylated (-COSH) via the rhodanese domain of the MOCS3 homolog.

It is found in the cytoplasm. It participates in tRNA modification; 5-methoxycarbonylmethyl-2-thiouridine-tRNA biosynthesis. In terms of biological role, acts as a sulfur carrier required for 2-thiolation of mcm(5)S(2)U at tRNA wobble positions of cytosolic tRNA(Lys), tRNA(Glu) and tRNA(Gln). Serves as sulfur donor in tRNA 2-thiolation reaction by being thiocarboxylated (-COSH) at its C-terminus by MOCS3. The sulfur is then transferred to tRNA to form 2-thiolation of mcm(5)S(2)U. Also acts as a ubiquitin-like protein (UBL) that is covalently conjugated via an isopeptide bond to lysine residues of target proteins. The thiocarboxylated form serves as substrate for conjugation and oxidative stress specifically induces the formation of UBL-protein conjugates. The protein is Ubiquitin-related modifier 1 homolog of Anopheles gambiae (African malaria mosquito).